Reading from the N-terminus, the 631-residue chain is Clathrin interactor 1 (631 aa).

One can recognise an ENTH domain in the interval 24-157 (NVVMNYSEIE…QDDDRLREER (134 aa)). Arginine 37 serves as a coordination point for a 1,2-diacyl-sn-glycero-3-phospho-(1D-myo-inositol-4,5-bisphosphate). The interval 60–62 (FMY) is interaction with VTI1B. Arginine 75 provides a ligand contact to a 1,2-diacyl-sn-glycero-3-phospho-(1D-myo-inositol-4,5-bisphosphate). Interaction with VTI1B regions lie at residues 102 to 104 (SER) and 150 to 161 (DDRLREERKKAK). A phosphoserine mark is found at serine 171, serine 174, serine 213, serine 218, serine 235, serine 253, and serine 307. The segment at 227–339 (FRRKDREDSP…SSGDLVDLFD (113 aa)) is disordered. The span at 230–247 (KDREDSPERCSDSDEEKK) shows a compositional bias: basic and acidic residues. Polar residues predominate over residues 308–318 (PDQNASTHTPQ). The residue at position 316 (threonine 316) is a Phosphothreonine. Residues 319-331 (SSAKPSVPSSKSS) show a composition bias toward low complexity. Phosphoserine is present on residues serine 320 and serine 630.

It belongs to the epsin family. Binds clathrin heavy chain and AP-2. Interacts with VTI1B. Interacts with GGA2 (via GAE domain). Interacts with AP1G1 (via GAE domain). Interacts with AP1G2 (via GAE domain).

Its subcellular location is the cytoplasm. It localises to the perinuclear region. It is found in the membrane. The protein resides in the cytoplasmic vesicle. The protein localises to the clathrin-coated vesicle. Its function is as follows. Binds to membranes enriched in phosphatidylinositol 4,5-bisphosphate (PtdIns(4,5)P2). May have a role in transport via clathrin-coated vesicles from the trans-Golgi network to endosomes. Stimulates clathrin assembly. The polypeptide is Clathrin interactor 1 (Clint1) (Mus musculus (Mouse)).